The following is a 144-amino-acid chain: Large ribosomal subunit protein uL15 (144 aa).

Residues 1-54 (MRLNTLSPAEGSKKAGKRLGRGIGSGLGKTGGRGHKGQKSRSGGGVRRGFEGGQ) are disordered. The segment covering 21 to 31 (RGIGSGLGKTG) has biased composition (gly residues).

Belongs to the universal ribosomal protein uL15 family. In terms of assembly, part of the 50S ribosomal subunit.

Binds to the 23S rRNA. The sequence is that of Large ribosomal subunit protein uL15 from Salmonella enteritidis PT4 (strain P125109).